Consider the following 154-residue polypeptide: S-ribosylhomocysteine lyase (154 aa).

The Fe cation site is built by histidine 57, histidine 61, and cysteine 124.

It belongs to the LuxS family. Homodimer. The cofactor is Fe cation.

The catalysed reaction is S-(5-deoxy-D-ribos-5-yl)-L-homocysteine = (S)-4,5-dihydroxypentane-2,3-dione + L-homocysteine. Involved in the synthesis of autoinducer 2 (AI-2) which is secreted by bacteria and is used to communicate both the cell density and the metabolic potential of the environment. The regulation of gene expression in response to changes in cell density is called quorum sensing. Catalyzes the transformation of S-ribosylhomocysteine (RHC) to homocysteine (HC) and 4,5-dihydroxy-2,3-pentadione (DPD). In Exiguobacterium sibiricum (strain DSM 17290 / CCUG 55495 / CIP 109462 / JCM 13490 / 255-15), this protein is S-ribosylhomocysteine lyase.